A 429-amino-acid polypeptide reads, in one-letter code: Trigger factor (429 aa).

The PPIase FKBP-type domain maps to 161 to 246 (EDRVTIDFTG…LKKVEERELP (86 aa)).

It belongs to the FKBP-type PPIase family. Tig subfamily. In terms of assembly, homodimer and monomer. In vivo most of the ribosomes are in complex with monomeric TF. Uncomplexed TF, however, is in a monomer-dimer equilibrium with approximately two thirds of TF existing in a dimeric state.

The protein resides in the cytoplasm. It catalyses the reaction [protein]-peptidylproline (omega=180) = [protein]-peptidylproline (omega=0). Involved in protein export. Acts as a chaperone by maintaining the newly synthesized protein in an open conformation. Functions as a peptidyl-prolyl cis-trans isomerase. This chain is Trigger factor, found in Escherichia coli O45:K1 (strain S88 / ExPEC).